Reading from the N-terminus, the 306-residue chain is tRNA pseudouridine synthase B (306 aa).

The Nucleophile role is filled by D51.

It belongs to the pseudouridine synthase TruB family. Type 1 subfamily.

The catalysed reaction is uridine(55) in tRNA = pseudouridine(55) in tRNA. Its function is as follows. Responsible for synthesis of pseudouridine from uracil-55 in the psi GC loop of transfer RNAs. In Nocardia farcinica (strain IFM 10152), this protein is tRNA pseudouridine synthase B.